The chain runs to 339 residues: Malate dehydrogenase 3, cytoplasmic (339 aa).

NAD(+) is bound by residues 22–23, Asp-49, and Gly-96; that span reads NI. Residue Arg-105 participates in oxaloacetate binding. Positions 119 and 138 each coordinate NAD(+). Asn-138, Arg-169, His-194, and Ser-249 together coordinate oxaloacetate. Catalysis depends on His-194, which acts as the Proton acceptor.

Belongs to the LDH/MDH superfamily. MDH type 2 family. In terms of tissue distribution, expressed in rosette leaves at low levels.

It localises to the cytoplasm. The catalysed reaction is (S)-malate + NAD(+) = oxaloacetate + NADH + H(+). Functionally, catalyzes a reversible NAD-dependent dehydrogenase reaction involved in central metabolism and redox homeostasis between organelle compartments. The sequence is that of Malate dehydrogenase 3, cytoplasmic from Arabidopsis thaliana (Mouse-ear cress).